The primary structure comprises 102 residues: Small ribosomal subunit protein uS10 (102 aa).

The protein belongs to the universal ribosomal protein uS10 family. Part of the 30S ribosomal subunit.

In terms of biological role, involved in the binding of tRNA to the ribosomes. This is Small ribosomal subunit protein uS10 from Thiobacillus denitrificans (strain ATCC 25259 / T1).